A 156-amino-acid polypeptide reads, in one-letter code: MPRKGPAPKRPLVNDPVYGSQLVTQLVNKVLLDGKKSLAERIVYGALEQAREKTGTDPVVTLKRAMDNVKPSLEVRSRRVGGATYQVPVEVRPDRSVTLALRWLVSFSKARREKTMIERLANEILDASNGLGAAVKRREDTHKMAEANRAFAHYRW.

The protein belongs to the universal ribosomal protein uS7 family. In terms of assembly, part of the 30S ribosomal subunit. Contacts proteins S9 and S11.

In terms of biological role, one of the primary rRNA binding proteins, it binds directly to 16S rRNA where it nucleates assembly of the head domain of the 30S subunit. Is located at the subunit interface close to the decoding center, probably blocks exit of the E-site tRNA. In Mycolicibacterium gilvum (strain PYR-GCK) (Mycobacterium gilvum (strain PYR-GCK)), this protein is Small ribosomal subunit protein uS7.